The chain runs to 220 residues: MEHEFWLQSWHEGRTGFHQLRVQPLLQKYWPTLDLPTGSKIFVPLTGKSLDMAWLAAQGYRVLGVELSLLAVQQFFAEHGLKPAVRESHYGTHYTARNIEVICGDTFALDAALLSDCSGIYDRAALIALPPELRVPYINELMTCLPAGCSGLLITLEYQQQEMVGPPFSVEEAEVLKCYSPRWCVKLLERNDILPQEPGFAARGLTKLATAVYQLQRLAV.

Positions 10, 45, 66, and 123 each coordinate S-adenosyl-L-methionine.

The protein belongs to the class I-like SAM-binding methyltransferase superfamily. TPMT family.

It localises to the cytoplasm. The enzyme catalyses S-adenosyl-L-methionine + a thiopurine = S-adenosyl-L-homocysteine + a thiopurine S-methylether.. The chain is Thiopurine S-methyltransferase from Nitrosomonas eutropha (strain DSM 101675 / C91 / Nm57).